We begin with the raw amino-acid sequence, 228 residues long: ATP phosphoribosyltransferase (228 aa).

It belongs to the ATP phosphoribosyltransferase family. Short subfamily. Heteromultimer composed of HisG and HisZ subunits.

Its subcellular location is the cytoplasm. It catalyses the reaction 1-(5-phospho-beta-D-ribosyl)-ATP + diphosphate = 5-phospho-alpha-D-ribose 1-diphosphate + ATP. It participates in amino-acid biosynthesis; L-histidine biosynthesis; L-histidine from 5-phospho-alpha-D-ribose 1-diphosphate: step 1/9. Catalyzes the condensation of ATP and 5-phosphoribose 1-diphosphate to form N'-(5'-phosphoribosyl)-ATP (PR-ATP). Has a crucial role in the pathway because the rate of histidine biosynthesis seems to be controlled primarily by regulation of HisG enzymatic activity. This chain is ATP phosphoribosyltransferase, found in Acinetobacter baylyi (strain ATCC 33305 / BD413 / ADP1).